Here is a 307-residue protein sequence, read N- to C-terminus: Putative lipid kinase SE_0507 (307 aa).

One can recognise a DAGKc domain in the interval 3 to 139 (QPYNHGVLFY…YDVLKVNDLY (137 aa)). ATP contacts are provided by residues serine 44, 74-80 (GDGTLNE), and threonine 101. Mg(2+) is bound by residues serine 220, aspartate 223, and arginine 225. Glutamate 281 functions as the Proton acceptor in the catalytic mechanism.

Belongs to the diacylglycerol/lipid kinase family. Requires Mg(2+) as cofactor.

In terms of biological role, may catalyze the ATP-dependent phosphorylation of lipids other than diacylglycerol (DAG). In Staphylococcus epidermidis (strain ATCC 12228 / FDA PCI 1200), this protein is Putative lipid kinase SE_0507.